The chain runs to 73 residues: MNLNEESRENVVFMIEEIKKKLQVVNGSVLNPDSVDMSRYEDLRDIYDMIKKKNNFSVSEMDAIAVELGRLRK.

Belongs to the UPF0435 family.

In Halalkalibacterium halodurans (strain ATCC BAA-125 / DSM 18197 / FERM 7344 / JCM 9153 / C-125) (Bacillus halodurans), this protein is UPF0435 protein BH2488.